The chain runs to 451 residues: UDP-N-acetylmuramoylalanine--D-glutamate ligase (451 aa).

Residue 119 to 125 participates in ATP binding; sequence GSNGKTT.

The protein belongs to the MurCDEF family.

Its subcellular location is the cytoplasm. The enzyme catalyses UDP-N-acetyl-alpha-D-muramoyl-L-alanine + D-glutamate + ATP = UDP-N-acetyl-alpha-D-muramoyl-L-alanyl-D-glutamate + ADP + phosphate + H(+). The protein operates within cell wall biogenesis; peptidoglycan biosynthesis. In terms of biological role, cell wall formation. Catalyzes the addition of glutamate to the nucleotide precursor UDP-N-acetylmuramoyl-L-alanine (UMA). This is UDP-N-acetylmuramoylalanine--D-glutamate ligase from Streptococcus agalactiae serotype III (strain NEM316).